A 231-amino-acid polypeptide reads, in one-letter code: Large ribosomal subunit protein uL1 (231 aa).

Belongs to the universal ribosomal protein uL1 family. As to quaternary structure, part of the 50S ribosomal subunit.

In terms of biological role, binds directly to 23S rRNA. The L1 stalk is quite mobile in the ribosome, and is involved in E site tRNA release. Protein L1 is also a translational repressor protein, it controls the translation of the L11 operon by binding to its mRNA. This is Large ribosomal subunit protein uL1 from Carboxydothermus hydrogenoformans (strain ATCC BAA-161 / DSM 6008 / Z-2901).